The following is a 498-amino-acid chain: ATP synthase subunit beta, chloroplastic (498 aa).

Position 172-179 (172-179) interacts with ATP; sequence GGAGVGKT.

Belongs to the ATPase alpha/beta chains family. In terms of assembly, F-type ATPases have 2 components, CF(1) - the catalytic core - and CF(0) - the membrane proton channel. CF(1) has five subunits: alpha(3), beta(3), gamma(1), delta(1), epsilon(1). CF(0) has four main subunits: a(1), b(1), b'(1) and c(9-12).

The protein resides in the plastid. The protein localises to the chloroplast thylakoid membrane. The enzyme catalyses ATP + H2O + 4 H(+)(in) = ADP + phosphate + 5 H(+)(out). Its function is as follows. Produces ATP from ADP in the presence of a proton gradient across the membrane. The catalytic sites are hosted primarily by the beta subunits. The sequence is that of ATP synthase subunit beta, chloroplastic from Gossypium hirsutum (Upland cotton).